Consider the following 868-residue polypeptide: LPS-assembly protein LptD (868 aa).

A signal peptide spans 1-24 (MLKGIHKYLLMCFGTVLFTVQANA).

The protein belongs to the LptD family. In terms of assembly, component of the lipopolysaccharide transport and assembly complex. Interacts with LptE and LptA.

It is found in the cell outer membrane. In terms of biological role, together with LptE, is involved in the assembly of lipopolysaccharide (LPS) at the surface of the outer membrane. The polypeptide is LPS-assembly protein LptD (Francisella tularensis subsp. tularensis (strain FSC 198)).